The chain runs to 107 residues: Ig kappa chain V-VI region NQ5-78.2.6 (107 aa).

The interval Gln1–Cys23 is framework-1. The cysteines at positions 23 and 87 are disulfide-linked. The complementarity-determining-1 stretch occupies residues Ser24–His33. The framework-2 stretch occupies residues Trp34–Tyr48. Residues Asp49 to Ser55 form a complementarity-determining-2 region. The framework-3 stretch occupies residues Gly56–Cys87. The complementarity-determining-3 stretch occupies residues Gln88 to Thr96. The segment at Phe97–Lys106 is framework-4.

Anti-2-phenyl oxazolone (PHOX) Antibody. This Mus musculus (Mouse) protein is Ig kappa chain V-VI region NQ5-78.2.6.